Consider the following 73-residue polypeptide: Beta-defensin 108B (73 aa).

The first 22 residues, 1–22, serve as a signal peptide directing secretion; that stretch reads MRIAVLLFAIFFFMSQVLPARG. 3 disulfide bridges follow: cysteine 28–cysteine 55, cysteine 35–cysteine 49, and cysteine 39–cysteine 56.

This sequence belongs to the beta-defensin family. In terms of tissue distribution, specifically expressed in testis. Low expression is detected also in liver.

Its subcellular location is the secreted. In terms of biological role, has antibacterial activity. The chain is Beta-defensin 108B (DEFB108B) from Homo sapiens (Human).